The primary structure comprises 111 residues: uncharacterized protein (111 aa).

Belongs to the asfivirus E111R family.

This is an uncharacterized protein from Ornithodoros (relapsing fever ticks).